Reading from the N-terminus, the 353-residue chain is T-complex protein 1 subunit eta (353 aa).

It belongs to the TCP-1 chaperonin family. In terms of assembly, heterooligomeric complex of about 850 to 900 kDa that forms two stacked rings, 12 to 16 nm in diameter.

The protein localises to the cytoplasm. In terms of biological role, molecular chaperone; assists the folding of proteins upon ATP hydrolysis. Known to play a role, in vitro, in the folding of actin and tubulin. This is T-complex protein 1 subunit eta from Tetrahymena thermophila.